We begin with the raw amino-acid sequence, 634 residues long: uncharacterized protein (634 aa).

This is an uncharacterized protein from Homo sapiens (Human).